A 738-amino-acid polypeptide reads, in one-letter code: Phosphoribosylformylglycinamidine synthase subunit PurL (738 aa).

The active site involves histidine 41. 2 residues coordinate ATP: tyrosine 44 and lysine 83. Glutamate 85 is a binding site for Mg(2+). Residues 86–89 and arginine 108 contribute to the substrate site; that span reads SHNH. Histidine 87 functions as the Proton acceptor in the catalytic mechanism. Aspartate 109 serves as a coordination point for Mg(2+). A substrate-binding site is contributed by glutamine 233. Aspartate 261 is a Mg(2+) binding site. Residue 305–307 participates in substrate binding; sequence ESQ. Residues aspartate 490 and glycine 527 each contribute to the ATP site. Asparagine 528 provides a ligand contact to Mg(2+). Serine 530 contacts substrate.

It belongs to the FGAMS family. As to quaternary structure, monomer. Part of the FGAM synthase complex composed of 1 PurL, 1 PurQ and 2 PurS subunits.

Its subcellular location is the cytoplasm. It carries out the reaction N(2)-formyl-N(1)-(5-phospho-beta-D-ribosyl)glycinamide + L-glutamine + ATP + H2O = 2-formamido-N(1)-(5-O-phospho-beta-D-ribosyl)acetamidine + L-glutamate + ADP + phosphate + H(+). It functions in the pathway purine metabolism; IMP biosynthesis via de novo pathway; 5-amino-1-(5-phospho-D-ribosyl)imidazole from N(2)-formyl-N(1)-(5-phospho-D-ribosyl)glycinamide: step 1/2. In terms of biological role, part of the phosphoribosylformylglycinamidine synthase complex involved in the purines biosynthetic pathway. Catalyzes the ATP-dependent conversion of formylglycinamide ribonucleotide (FGAR) and glutamine to yield formylglycinamidine ribonucleotide (FGAM) and glutamate. The FGAM synthase complex is composed of three subunits. PurQ produces an ammonia molecule by converting glutamine to glutamate. PurL transfers the ammonia molecule to FGAR to form FGAM in an ATP-dependent manner. PurS interacts with PurQ and PurL and is thought to assist in the transfer of the ammonia molecule from PurQ to PurL. The protein is Phosphoribosylformylglycinamidine synthase subunit PurL of Alkaliphilus metalliredigens (strain QYMF).